The sequence spans 484 residues: MKKWLMVQGTTSDAGKSVLVAGLCRVLARRGIQVCPFKPQNMALNSAVTPDGGEIGRAQAVQAQACGIAPSVHMNPVLLKPNSDTGAQVILQGRALSNMEANAYHDYKKVAMDTVMDSFQRLQQEYEAIMIEGAGSPAEINLRENDIANMGFAEKADVPVIIVADIDRGGVFAHLYGTLALLSESEQARVKGFVINRFRGDIGLLQSGLDWLEQKTGKPVIGVLPYLHGFDLEAEDAIAAQQNLSADRQLRVAVPVFTRISNHTDFDPLRLNPNIDFRYVGQGESLSGADLIILPGSKSTRADLAYLRSQGWDKEILRHLRLGGKVMGICGGFQMLGEWVHDPLGIEGEAGSSEGLGLFAMQTELTAEKRLTNVKGHLTLDGQTVAAQGYEIHAGHSSWAADQKSPIILSDGSLDGLVSDCNQGFGTYLHGIFDRPETALRICQWAGAKEIEAYDHRAAQERAIDRIADAIEQHLDLTLLWPDL.

The GATase cobBQ-type domain maps to 249–438; the sequence is QLRVAVPVFT…LHGIFDRPET (190 aa). Residue cysteine 330 is the Nucleophile of the active site. Residue histidine 430 is part of the active site.

This sequence belongs to the CobB/CobQ family. CobQ subfamily.

The protein operates within cofactor biosynthesis; adenosylcobalamin biosynthesis. Catalyzes amidations at positions B, D, E, and G on adenosylcobyrinic A,C-diamide. NH(2) groups are provided by glutamine, and one molecule of ATP is hydrogenolyzed for each amidation. This Vibrio cholerae serotype O1 (strain ATCC 39315 / El Tor Inaba N16961) protein is Cobyric acid synthase.